A 3336-amino-acid polypeptide reads, in one-letter code: Pericentrin (3336 aa).

Disordered regions lie at residues 1–71 and 81–100; these read MEVE…DICK and GAGG…KRED. Residues 27-37 are compositionally biased toward basic and acidic residues; that stretch reads TKGDSSHSEKK. Phosphoserine is present on Ser-44. At Ser-188 the chain carries Phosphoserine. At Thr-191 the chain carries Phosphothreonine. The stretch at 258–553 forms a coiled coil; the sequence is HTAQLELTQA…RLQGAREDAL (296 aa). Residues 569–589 are disordered; that stretch reads KPEKGRKDHVDELEPERHKES. Residues Ser-610 and Ser-682 each carry the phosphoserine modification. Coiled-coil stretches lie at residues 675 to 835 and 1010 to 1146; these read TEHK…DALH and TILT…MLKA. The residue at position 1245 (Ser-1245) is a Phosphoserine. A coiled-coil region spans residues 1299–1949; that stretch reads NEETAQVVRK…FLRCQVELDR (651 aa). The tract at residues 1619–1638 is disordered; sequence TLDAGRCPEPPSGSPPEGPE. Over residues 1626-1636 the composition is skewed to pro residues; it reads PEPPSGSPPEG. Ser-1653 and Ser-1712 each carry phosphoserine. The tract at residues 1954 to 1974 is disordered; the sequence is RATAHTRVPGAHPQPRMDGGA. Ser-2044 carries the phosphoserine modification. The stretch at 2064-2082 forms a coiled coil; it reads VDLVAQVKQLQEKLNRLLY. The tract at residues 2168–2214 is disordered; the sequence is SLIPDEMPDSPIQEKSECQDMSLSSPTSVLGGSRHQSHTAEAGPRKS. 5 positions are modified to phosphoserine: Ser-2177, Ser-2192, Ser-2225, Ser-2226, and Ser-2327. The segment covering 2186–2197 has biased composition (polar residues); it reads QDMSLSSPTSVL. Residues 2318-2374 form a disordered region; the sequence is SFDSQETLSSPPPGLEGKADRSEKSDGSGFGARLSPGSGGPEAQTAGPVTPASISGR. Residues 2334 to 2343 show a composition bias toward basic and acidic residues; the sequence is GKADRSEKSD. Ser-2352, Ser-2355, Ser-2477, and Ser-2486 each carry phosphoserine. Residues 2536–3086 are a coiled coil; the sequence is QEKLQHLRTA…EKLLKHHLQK (551 aa). Disordered regions lie at residues 2875–2910 and 3084–3126; these read LEQS…WRKW and LQKG…EEAH. Composition is skewed to basic and acidic residues over residues 2876-2896 and 3092-3102; these read EQSH…RSAE and RSERSAWKPDE. Residues 2983–3246 form an interaction with NEK2 region; it reads LSAARLLTSF…ARQPQSPPRT (264 aa). Residues 3195 to 3208 are calmodulin-binding; the sequence is RFRTAVRVVIAILR. The segment at 3224–3300 is disordered; it reads ALAQGKAPRP…RSLTASQDPE (77 aa). A compositionally biased stretch (low complexity) spans 3226-3240; that stretch reads AQGKAPRPGPRARQP. A compositionally biased stretch (polar residues) spans 3283-3297; that stretch reads PSPNSRLERSLTASQ. The residue at position 3302 (Ser-3302) is a Phosphoserine.

As to quaternary structure, interacts with CHD3. Interacts with CHD4; the interaction regulates centrosome integrity. Interacts with DISC1 and PCM1. Binds calmodulin. Interacts with CDK5RAP2; the interaction is leading to centrosomal localization of PCNT and CDK5RAP2. Interacts with isoform 1 of NEK2. Interacts with CEP131. Interacts with CCDC13. Interacts with CEP68. Interacts with ATF5; the ATF5:PCNT:polyglutamylated tubulin (PGT) tripartite unites the mother centriole and the pericentriolar material (PCM) in the centrosome. Cleaved during mitotis which leads to removal of CDK5RAP2 from the centrosome and promotes centriole disengagement and subsequent centriole separation. The C-terminal fragment is rapidly degraded following cleavage. Post-translationally, ubiquitinated by TRIM43; leading to proteasomal degradation. Expressed in all tissues tested, including placenta, liver, kidney and thymus.

Its subcellular location is the cytoplasm. The protein resides in the cytoskeleton. The protein localises to the microtubule organizing center. It is found in the centrosome. In terms of biological role, integral component of the filamentous matrix of the centrosome involved in the initial establishment of organized microtubule arrays in both mitosis and meiosis. Plays a role, together with DISC1, in the microtubule network formation. Is an integral component of the pericentriolar material (PCM). May play an important role in preventing premature centrosome splitting during interphase by inhibiting NEK2 kinase activity at the centrosome. This chain is Pericentrin (PCNT), found in Homo sapiens (Human).